The primary structure comprises 315 residues: tRNA uridine(34) hydroxylase (315 aa).

Positions 136 to 230 (SDPETLVIDT…YLEEIPPEES (95 aa)) constitute a Rhodanese domain. The active-site Cysteine persulfide intermediate is C190.

This sequence belongs to the TrhO family.

The catalysed reaction is uridine(34) in tRNA + AH2 + O2 = 5-hydroxyuridine(34) in tRNA + A + H2O. Functionally, catalyzes oxygen-dependent 5-hydroxyuridine (ho5U) modification at position 34 in tRNAs. This chain is tRNA uridine(34) hydroxylase, found in Sinorhizobium medicae (strain WSM419) (Ensifer medicae).